Reading from the N-terminus, the 737-residue chain is Protein OPG064 (737 aa).

Position 1 is an N-acetylmethionine; by host (M1). C496 and C535 are disulfide-bonded.

Belongs to the orthopoxvirus OPG064 family. Interacts with host KLC2; this interaction promotes IEV trafficking by engaging the host kinesin-1 complex. Interacts with protein OPG056/F12. Post-translationally, N-acetylated on initiator methionine by host.

Its function is as follows. Plays a role in intracellular enveloped virus (IEV) transport to the cell surface on microtubules. Together with protein OPG056/F12, forms a complex that interacts with host KLC2 (kinesin light chain isoform 2) to engage the kinesin-1 complex and thereby promote IEV trafficking. The protein is Protein OPG064 (OPG064) of Bos taurus (Bovine).